The sequence spans 274 residues: ATP synthase subunit delta (274 aa).

The protein belongs to the ATPase delta chain family. In terms of assembly, F-type ATPases have 2 components, F(1) - the catalytic core - and F(0) - the membrane proton channel. F(1) has five subunits: alpha(3), beta(3), gamma(1), delta(1), epsilon(1). F(0) has three main subunits: a(1), b(2) and c(10-14). The alpha and beta chains form an alternating ring which encloses part of the gamma chain. F(1) is attached to F(0) by a central stalk formed by the gamma and epsilon chains, while a peripheral stalk is formed by the delta and b chains.

It localises to the cell membrane. Functionally, f(1)F(0) ATP synthase produces ATP from ADP in the presence of a proton or sodium gradient. F-type ATPases consist of two structural domains, F(1) containing the extramembraneous catalytic core and F(0) containing the membrane proton channel, linked together by a central stalk and a peripheral stalk. During catalysis, ATP synthesis in the catalytic domain of F(1) is coupled via a rotary mechanism of the central stalk subunits to proton translocation. Its function is as follows. This protein is part of the stalk that links CF(0) to CF(1). It either transmits conformational changes from CF(0) to CF(1) or is implicated in proton conduction. This Salinispora tropica (strain ATCC BAA-916 / DSM 44818 / JCM 13857 / NBRC 105044 / CNB-440) protein is ATP synthase subunit delta.